We begin with the raw amino-acid sequence, 295 residues long: Small ribosomal subunit biogenesis GTPase RsgA (295 aa).

The region spanning 68–228 (KNLLVKPHVA…VVDTPGFANL (161 aa)) is the CP-type G domain. Residues 117 to 120 (NKMD) and 170 to 178 (GLSGVGKSS) contribute to the GTP site. Positions 250, 255, 257, and 263 each coordinate Zn(2+).

This sequence belongs to the TRAFAC class YlqF/YawG GTPase family. RsgA subfamily. Monomer. Associates with 30S ribosomal subunit, binds 16S rRNA. Zn(2+) is required as a cofactor.

The protein localises to the cytoplasm. In terms of biological role, one of several proteins that assist in the late maturation steps of the functional core of the 30S ribosomal subunit. Helps release RbfA from mature subunits. May play a role in the assembly of ribosomal proteins into the subunit. Circularly permuted GTPase that catalyzes slow GTP hydrolysis, GTPase activity is stimulated by the 30S ribosomal subunit. The polypeptide is Small ribosomal subunit biogenesis GTPase RsgA (Thermotoga neapolitana (strain ATCC 49049 / DSM 4359 / NBRC 107923 / NS-E)).